Consider the following 905-residue polypeptide: MYKLNVISLIILTTYTGATYASARDLPQGSSVVVGEANVSTIGNKMTIDQKTPTTQIDWHSFDIGQNKEVEFKQPDANSVAYNRVTGGNASQIQGKLTANGKVYLANPNGVIITQGAEINVAGLFATTKDLERISENGNGNGNKFTRKLKDGQVVKEGQVINKGKIKAKDFVVLNGDKVINEGEIDATNNGKVYLSSGYNFTFTLSDSSISVALEDNAVQSIVQNEGIIKAGDITLNAKGRNQALDSLVMNNGVLEATKVSNKNGKVVLSADDVQLNNKSDIKGESEVVFTNEPKNKIKITSQTGSKVTSPKINFTGKSVNINGDFGRDDSKAHYNEEHKRLDTEVNIDVPDNENIRIAEKDNTGTGTGTDSFIQTGALSSLLANNGKVNLKGKDVNISGRIHIDSFRGSDSLLKLTNQGHIKINHADIHSTGRLFFITSLQNEKDSQSDITITDSKINLGNGAMGLGRSLDKENCDNQRWCRTETSQRKKFDVHMRNVVFDQVDDVVVAGGFKKVNLDNIVATGKTNFYIDGGVSRNNSRYEYGVLDLDKRTLLSELDQRRRRWKYYNDLDLDMNKAYWHRFDMFATKNTGRSTIKDTEINISNSKINLKNGFVHLLAEKIKLDNSKIDITFDKDNSQDISTQINRLGMNGKVSMVNSHIKIVGDEKSDISAKAPYATMFLIGELIGEKSSIFVKSHQGYTFRTDGDTKIAGKNSKDDLKITAINTGGRTGKEVIINGAPGSIDNDANIANMAFTIGDNANTKTTIENADITALAPNGGTAYLSSKGVEIEVNPNSNFTFFELPREKNFNQTKIKGDSTKLSERGFARLYDKINGVRASNLSAEQLNVTDASEKIINTKLVSSLDVEKLVSVAVCDAGKGCEEQQFGDKGNNTKVSVGELETEQ.

Residues 1–21 (MYKLNVISLIILTTYTGATYA) form the signal peptide.

Its subcellular location is the secreted. In terms of biological role, binds heme/hemopexin complexes. This is Heme/hemopexin-binding protein (hxuA) from Haemophilus influenzae (strain ATCC 51907 / DSM 11121 / KW20 / Rd).